The primary structure comprises 303 residues: MAETNPELSDLMAQTNKKIVPKFTEIFPVEDVNYPYSAFIASVRKDVIKHCTDHKGIFQPVLPPEKKVPELWFYTELKTRTSSITLAIRMDNLYLVGFRTPGGVWWELARPATPTSSATTPGGSASAAGTRTSSATRVWRPSPWAARDDQGRQRPGEEEEDGDTGGGGGADADADAGGAELAAAAAAADPQADTKSKLVKLVVMVCEGLRFNTLSRTVDAGFNSQHGVTLTVTQGKQVQKWDRISKAAFEWADHPTAVIPDMQKLGIKDKNEAARIVALVKNQTTAAAAAATAASADNDDDEA.

Residues 112 to 137 (ATPTSSATTPGGSASAAGTRTSSATR) are compositionally biased toward low complexity. The disordered stretch occupies residues 112–175 (ATPTSSATTP…GGGGADADAD (64 aa)). Over residues 146 to 156 (ARDDQGRQRPG) the composition is skewed to basic and acidic residues.

It belongs to the ribosome-inactivating protein family. Type 1 RIP subfamily. As to quaternary structure, monomer. Endosperm.

It is found in the cytoplasm. The catalysed reaction is Endohydrolysis of the N-glycosidic bond at one specific adenosine on the 28S rRNA.. A possible regulatory factor for the synthesis of zeins, the major group of storage proteins. This is Albumin b-32 (O6) from Zea mays (Maize).